We begin with the raw amino-acid sequence, 154 residues long: Transcription antitermination protein NusB (154 aa).

This sequence belongs to the NusB family.

Its function is as follows. Involved in transcription antitermination. Required for transcription of ribosomal RNA (rRNA) genes. Binds specifically to the boxA antiterminator sequence of the ribosomal RNA (rrn) operons. This chain is Transcription antitermination protein NusB, found in Rickettsia typhi (strain ATCC VR-144 / Wilmington).